Here is a 1026-residue protein sequence, read N- to C-terminus: Adenylate-forming reductase 06235 (1026 aa).

The segment at 37 to 422 (FEFHAKANPD…LGRIDNQVKI (386 aa)) is adenylation (A) domain. AMP contacts are provided by residues 332–333 (VT) and 412–415 (HLGR). Residues 556-638 (SLVSTVGSTV…ALFIWILVTK (83 aa)) form a thiolation and peptide carrier (T) domain region. The interval 682–901 (CIRRVCARIY…PPTKMWVKGV (220 aa)) is reductase (R) domain. NADP(+)-binding positions include 685 to 688 (RVCA), 769 to 771 (TAL), and Y840.

Belongs to the adenylate-forming reductase family.

In terms of biological role, adenylate-forming reductase, a natural product biosynthesis enzyme that resembles non-ribosomal peptide synthetases, yet serves to modify one substrate, rather than to condense two or more building blocks. The A-domain preferentially accepts L-serine, L-alanine and L-valine as substrates. The natural product of the enzyme is not yet known. The protein is Adenylate-forming reductase 06235 of Coprinopsis cinerea (strain Okayama-7 / 130 / ATCC MYA-4618 / FGSC 9003) (Inky cap fungus).